The sequence spans 445 residues: MSREIVNIQAGQAGNQVGEAFWRMLLAEHGLDDAGMYKGNDPQQIARAGVYFTQVDSSGPTKYVPRSVQVDLESGVCNRLRSGPLGQLFRPDTYFTSDSGAGNNWAKGYYTEGAELIDGILDIVRRQCEATEALQGFQMIHSLGGGTGAGLGSLLLSKLREEYPDRMLSTFSILPAPNVSETVVEPYNSLLSIHQLVDNCDLTICIDNEALYDIAVRTLKIKSPGYKDLNQLIAKVMCGVSTSLRFPGQLNGDLRKLGMNLVPFPRLHFLMPSFAPFYDPKARTFQRLSVSELTSSLFDKKNLLVASDPRFGRYLTAACIFRGKVSSHEAENSVMQLQRKNSNLFVEWIPDNVSVSLCSVPPVGQPQAAVALANSTCMQELFKRNLDQFALMFKRRAFLHWYTGEGMDVMEFTEAESNTQDLISEYQQYQEATVEEEEADIEGEQ.

Residues Gln12, Glu73, Ser142, Gly146, Thr147, Gly148, Asn208, and Asn230 each coordinate GTP. Residue Glu73 coordinates Mg(2+).

This sequence belongs to the tubulin family. As to quaternary structure, dimer of alpha and beta chains. A typical microtubule is a hollow water-filled tube with an outer diameter of 25 nm and an inner diameter of 15 nM. Alpha-beta heterodimers associate head-to-tail to form protofilaments running lengthwise along the microtubule wall with the beta-tubulin subunit facing the microtubule plus end conferring a structural polarity. Microtubules usually have 13 protofilaments but different protofilament numbers can be found in some organisms and specialized cells. The cofactor is Mg(2+).

It is found in the cytoplasm. The protein localises to the cytoskeleton. Its function is as follows. Tubulin is the major constituent of microtubules, a cylinder consisting of laterally associated linear protofilaments composed of alpha- and beta-tubulin heterodimers. Microtubules grow by the addition of GTP-tubulin dimers to the microtubule end, where a stabilizing cap forms. Below the cap, tubulin dimers are in GDP-bound state, owing to GTPase activity of alpha-tubulin. The chain is Tubulin beta-2 chain (TUBB2) from Suillus bovinus (Jersey cow bolete).